The sequence spans 227 residues: Ribonuclease 3 (227 aa).

In terms of domain architecture, RNase III spans 4 to 133 (FEKLEKLLSY…LIAAIYLDSN (130 aa)). Mg(2+) is bound at residue E46. The active site involves D50. Residues N119 and E122 each contribute to the Mg(2+) site. E122 is a catalytic residue. The DRBM domain occupies 158 to 226 (DPKTALQEWA…ARSLLHRLKN (69 aa)).

It belongs to the ribonuclease III family. In terms of assembly, homodimer. Mg(2+) serves as cofactor.

The protein resides in the cytoplasm. The catalysed reaction is Endonucleolytic cleavage to 5'-phosphomonoester.. Its function is as follows. Digests double-stranded RNA. Involved in the processing of primary rRNA transcript to yield the immediate precursors to the large and small rRNAs (23S and 16S). Processes some mRNAs, and tRNAs when they are encoded in the rRNA operon. Processes pre-crRNA and tracrRNA of type II CRISPR loci if present in the organism. This chain is Ribonuclease 3, found in Rickettsia conorii (strain ATCC VR-613 / Malish 7).